The chain runs to 64 residues: Large ribosomal subunit protein bL35 (64 aa).

This sequence belongs to the bacterial ribosomal protein bL35 family.

The polypeptide is Large ribosomal subunit protein bL35 (Aliivibrio fischeri (strain ATCC 700601 / ES114) (Vibrio fischeri)).